A 165-amino-acid chain; its full sequence is HTH-type transcriptional regulator MmpR5 (165 aa).

Residues 1–151 form the HTH marR-type domain; that stretch reads MSVNDGVDQM…LLAYMENVVS (151 aa). Positions 53-76 form a DNA-binding region, H-T-H motif; it reads SEELATALAASSGGISTNARMLIQ.

Homodimer.

Its function is as follows. Controls the expression level of the Mmps2-MmpL2, MmpS4-MmpL4, and MmpS5-MmpL5 transport systems. Also controls its own expression. Acts by binding directly to the promoter regions. In Mycobacterium tuberculosis (strain ATCC 25618 / H37Rv), this protein is HTH-type transcriptional regulator MmpR5.